The following is a 292-amino-acid chain: GTP cyclohydrolase FolE2 (292 aa).

It belongs to the GTP cyclohydrolase IV family.

The enzyme catalyses GTP + H2O = 7,8-dihydroneopterin 3'-triphosphate + formate + H(+). It participates in cofactor biosynthesis; 7,8-dihydroneopterin triphosphate biosynthesis; 7,8-dihydroneopterin triphosphate from GTP: step 1/1. Functionally, converts GTP to 7,8-dihydroneopterin triphosphate. The protein is GTP cyclohydrolase FolE2 of Macrococcus caseolyticus (strain JCSC5402) (Macrococcoides caseolyticum).